The chain runs to 253 residues: MVSSSTTVPRSGVYYFSQGWKLVTLPGIRRFVILPLLVNIVLMGGAFWWLFTQLDAWIPSLMSHVPDWLQWLSYLLWPIAVISVLLVFGYFFSTLANWIAAPFNGLLAEQLEARLTGATPPDTGILGIMKDVPRIMKREWQKLAWYLPRAIVLLILYFIPGIGQTIAPVLWFLFSAWMLAIQYCDYPFDNHKVPFKTMRAALRTQKVANMQFGALTSLFTMIPVLNLFIMPVAVCGATAMWVDCWRAKHALWK.

Transmembrane regions (helical) follow at residues 31 to 51, 72 to 92, 151 to 171, and 222 to 242; these read FVIL…WWLF, LSYL…GYFF, IVLL…PVLW, and IPVL…AMWV.

It belongs to the CysZ family.

It localises to the cell inner membrane. Functionally, possibly involved in sulfate transport. High affinity, high specificity proton-dependent sulfate transporter, which mediates sulfate uptake. Provides the sulfur source for the cysteine synthesis pathway. The chain is Sulfate transporter CysZ from Salmonella typhimurium (strain LT2 / SGSC1412 / ATCC 700720).